A 155-amino-acid chain; its full sequence is Large ribosomal subunit protein eL24 (155 aa).

Basic and acidic residues predominate over residues 93-123; the sequence is KRNARPETRNATRAKHAEAAKERKEKEAERR. The segment at 93 to 155 is disordered; that stretch reads KRNARPETRN…SAPKVQATSR (63 aa).

The protein belongs to the eukaryotic ribosomal protein eL24 family.

The sequence is that of Large ribosomal subunit protein eL24 (RPL24) from Yarrowia lipolytica (strain CLIB 122 / E 150) (Yeast).